The following is an 819-amino-acid chain: Plastid division protein CDP1, chloroplastic (819 aa).

Residues 1-76 (MPVAYTFPVL…NAAGGGIHVV (76 aa)) constitute a chloroplast transit peptide. Over 77–572 (DNAPSRTSSL…NKIWDEWLSQ (496 aa)) the chain is Stromal. The stretch at 419-439 (EAEALEKLKQLESNSDSAVRN) forms a coiled coil. The chain crosses the membrane as a helical span at residues 573 to 593 (SSLIGRVSVVALLGCTVFFSL). At 594–819 (KLSGIRSGRL…FCQSDIQIQK (226 aa)) the chain is on the chloroplast intermembrane side. Residues 762-782 (IAGEAAEIEALLEEAAELVDE) are a coiled coil.

In terms of assembly, self-interacts. Interacts (via N-terminus) with ARC3 (via MORN domains). Binds (via N-terminus) to FTSZ2 proteins, FTSZ2-1 and FTSZ2-2. Recruited ARC3 to the middle of the plastid where subsequent complex made of CDP1/PARC6, ARC3 and FtsZ proteins can form; this complex enhances the dynamics of Z rings during chloroplast division. Interacts (via C-terminus) with PDV1 (via C-terminus). Interacts with MIND1. In terms of tissue distribution, exclusively expressed in young green tissues such as young cotyledons, shoot apex, emerging leaves and budding inflorescence.

The protein resides in the plastid. Its subcellular location is the chloroplast inner membrane. Functionally, component of the plastid division machinery required for PDV1 localization to constriction sites. Involved in chloroplast division site placement. Required for the proper formation of FtsZ rings at the division site in nongreen plastids (e.g. etioplasts). Inhibits FtsZ assembly, functioning as an antagonistic regulator of FtsZ dynamics against ARC6, by recruiting ARC3 to the middle of the plastid to facilitate its interaction with FtsZ proteins. Required during stromule biogenesis in the leaf epidermis, especially in non-mesophyll cells plastids. The chain is Plastid division protein CDP1, chloroplastic from Arabidopsis thaliana (Mouse-ear cress).